Here is a 226-residue protein sequence, read N- to C-terminus: 7-cyano-7-deazaguanine synthase (226 aa).

8-18 (LSGGLDSTTVL) serves as a coordination point for ATP. The Zn(2+) site is built by cysteine 190, cysteine 198, cysteine 201, and cysteine 204.

It belongs to the QueC family. In terms of assembly, homodimer. It depends on Zn(2+) as a cofactor.

It carries out the reaction 7-carboxy-7-deazaguanine + NH4(+) + ATP = 7-cyano-7-deazaguanine + ADP + phosphate + H2O + H(+). It functions in the pathway purine metabolism; 7-cyano-7-deazaguanine biosynthesis. In terms of biological role, catalyzes the ATP-dependent conversion of 7-carboxy-7-deazaguanine (CDG) to 7-cyano-7-deazaguanine (preQ(0)). The chain is 7-cyano-7-deazaguanine synthase from Clostridium kluyveri (strain ATCC 8527 / DSM 555 / NBRC 12016 / NCIMB 10680 / K1).